The primary structure comprises 138 residues: Large ribosomal subunit protein bL17 (138 aa).

It belongs to the bacterial ribosomal protein bL17 family. Part of the 50S ribosomal subunit. Contacts protein L32.

The sequence is that of Large ribosomal subunit protein bL17 from Methylorubrum populi (strain ATCC BAA-705 / NCIMB 13946 / BJ001) (Methylobacterium populi).